An 810-amino-acid polypeptide reads, in one-letter code: Chloride channel protein (810 aa).

At 2 to 48 (SHEKNEASGNPEAQSWKAQEAMLGVKTEVSRWRAVKNCLYRHLVKVL) the chain is on the cytoplasmic side. The next 2 membrane-spanning stretches (helical) occupy residues 49 to 86 (GEDW…LFAM) and 93 to 116 (LQYL…CQIV). The short motif at 122-126 (GSGIP) is the Selectivity filter part_1 element. Residue serine 123 participates in chloride binding. The helical intramembrane region spans 125–132 (IPELKTII). Transmembrane regions (helical) follow at residues 141-160 (LTLR…LSAG) and 166-184 (EGPF…NQLL). Positions 164–168 (GKEGP) match the Selectivity filter part_2 motif. Intramembrane regions (helical) lie at residues 201–213 (ILTV…ISCC) and 217–225 (PLAGVLFSI). The next 3 membrane-spanning stretches (helical) occupy residues 237–254 (YWRG…FRVL), 283–311 (LPAF…IVFM), and 320–339 (ILKK…LATL). A glycan (N-linked (GlcNAc...) asparagine) is linked at asparagine 365. 2 consecutive transmembrane segments (helical) span residues 389–408 (NIFI…AALA) and 416–439 (GAFV…MALL). The short motif at 416-420 (GAFVP) is the Selectivity filter part_3 element. Phenylalanine 418 contacts chloride. Positions 456–470 (GEYAVIGAAAMTGAV) form an intramembrane region, helical. An intramembrane region (note=Loop between two helices) is located at residues 471–472 (TH). Positions 473–484 (AVSTAVICFELT) form an intramembrane region, helical. An intramembrane region (note=Loop between two helices) is located at residues 485 to 489 (GQISH). Residues 490–506 (VLPMMVAVILANMVAQG) traverse the membrane as a helical segment. Residues 507 to 810 (LQPSLYDSII…RTATSNSSGK (304 aa)) lie on the Cytoplasmic side of the membrane. A chloride-binding site is contributed by tyrosine 512. The CBS 1 domain occupies 543 to 601 (MVRDVTSIASTSTYGDLLHVLRQTKLKFFPFVDTPETNTLLGSIERTEVEGLLQRRISA). Disordered regions lie at residues 604–631 (RQPA…DVPG) and 658–688 (KVQT…KHKG). Residues 724-781 (IDQSPFQLVEGTSLQKTHTLFSLLGLDRAYVTSMGKLVGVVALAEIQAAIEGSYQKGF) enclose the CBS 2 domain.

The protein belongs to the chloride channel (TC 2.A.49) family. ClC-0 subfamily. As to quaternary structure, homodimer. Each subunit has channel activity ('Double barreled channel').

Its subcellular location is the membrane. Its function is as follows. Voltage-gated chloride channel. This channel is thought to ensure the high conductance of the non-innervated membrane of the electrocyte necessary for efficient current generation caused by sodium influx through the acetylcholine receptor at the innervated membrane. The polypeptide is Chloride channel protein (Tetronarce californica (Pacific electric ray)).